The sequence spans 354 residues: UDP-3-O-acylglucosamine N-acyltransferase (354 aa).

His-247 functions as the Proton acceptor in the catalytic mechanism.

It belongs to the transferase hexapeptide repeat family. LpxD subfamily. In terms of assembly, homotrimer.

The enzyme catalyses a UDP-3-O-[(3R)-3-hydroxyacyl]-alpha-D-glucosamine + a (3R)-hydroxyacyl-[ACP] = a UDP-2-N,3-O-bis[(3R)-3-hydroxyacyl]-alpha-D-glucosamine + holo-[ACP] + H(+). It participates in bacterial outer membrane biogenesis; LPS lipid A biosynthesis. In terms of biological role, catalyzes the N-acylation of UDP-3-O-acylglucosamine using 3-hydroxyacyl-ACP as the acyl donor. Is involved in the biosynthesis of lipid A, a phosphorylated glycolipid that anchors the lipopolysaccharide to the outer membrane of the cell. This is UDP-3-O-acylglucosamine N-acyltransferase from Chlamydia trachomatis serovar A (strain ATCC VR-571B / DSM 19440 / HAR-13).